A 145-amino-acid polypeptide reads, in one-letter code: Large ribosomal subunit protein uL13 (145 aa).

The protein belongs to the universal ribosomal protein uL13 family. In terms of assembly, part of the 50S ribosomal subunit.

This protein is one of the early assembly proteins of the 50S ribosomal subunit, although it is not seen to bind rRNA by itself. It is important during the early stages of 50S assembly. The sequence is that of Large ribosomal subunit protein uL13 from Halobacterium salinarum (strain ATCC 700922 / JCM 11081 / NRC-1) (Halobacterium halobium).